A 1354-amino-acid polypeptide reads, in one-letter code: Tensin homolog (1354 aa).

In terms of domain architecture, Phosphatase tensin-type spans 38 to 207 (MKDRKEGVQV…GYFSSLLSGR (170 aa)). C144 acts as the Phosphocysteine intermediate in catalysis. In terms of domain architecture, C2 tensin-type spans 212 to 337 (SDPLYLHNII…VTVELVVSHT (126 aa)). Disordered stretches follow at residues 380-442 (EYSE…DVVP), 597-616 (STLQ…RTLN), 638-660 (SNTA…SVQL), 692-720 (DVRG…NNTP), 734-754 (SVTT…EADA), 794-879 (AANN…DRQR), and 1015-1035 (NGER…HNGY). A compositionally biased stretch (polar residues) spans 391–401 (SSKSANPINNN). The segment covering 408 to 417 (VGPPVPPKPS) has biased composition (pro residues). Composition is skewed to polar residues over residues 704–720 (HNAS…NNTP), 734–747 (SVTT…STPS), and 794–804 (AANNDENQHNL). The segment covering 821 to 843 (AEFRREEERLRNTRSPYGEERWR) has biased composition (basic and acidic residues). Residues 1017–1033 (ERGGSGHAAGGGGGGHN) show a composition bias toward gly residues. An SH2 domain is found at 1083–1187 (WYKPTISREQ…ALPTKLVLPD (105 aa)). The PTB domain occupies 1209–1353 (ACNVVYVGSV…NKVMLAQKNR (145 aa)).

Belongs to the PTEN phosphatase protein family. May interact (via SH2 domain) with receptor svh-2 (when tyrosine-phosphorylated). May interact (via C-terminus) with integrin pat-3. Expressed in ventral motor neurons, including ventral and dorsal D-type neurons, and in a subset of cells in the head.

The protein resides in the cell projection. Its subcellular location is the axon. It carries out the reaction O-phospho-L-tyrosyl-[protein] + H2O = L-tyrosyl-[protein] + phosphate. Its function is as follows. Probable phosphatase which regulates axon regeneration after injury by linking the svh-2 and integrin signaling pathways. In terms of biological role, not involved in axon regeneration after injury. In Caenorhabditis elegans, this protein is Tensin homolog.